Here is a 240-residue protein sequence, read N- to C-terminus: 2,3,4,5-tetrahydropyridine-2,6-dicarboxylate N-acetyltransferase (240 aa).

Belongs to the transferase hexapeptide repeat family. DapH subfamily.

It catalyses the reaction (S)-2,3,4,5-tetrahydrodipicolinate + acetyl-CoA + H2O = L-2-acetamido-6-oxoheptanedioate + CoA. It participates in amino-acid biosynthesis; L-lysine biosynthesis via DAP pathway; LL-2,6-diaminopimelate from (S)-tetrahydrodipicolinate (acetylase route): step 1/3. In terms of biological role, catalyzes the transfer of an acetyl group from acetyl-CoA to tetrahydrodipicolinate. In Bacillus cereus (strain AH187), this protein is 2,3,4,5-tetrahydropyridine-2,6-dicarboxylate N-acetyltransferase.